Reading from the N-terminus, the 129-residue chain is Small ribosomal subunit protein uS11 (129 aa).

The protein belongs to the universal ribosomal protein uS11 family. Part of the 30S ribosomal subunit. Interacts with proteins S7 and S18. Binds to IF-3.

Its function is as follows. Located on the platform of the 30S subunit, it bridges several disparate RNA helices of the 16S rRNA. Forms part of the Shine-Dalgarno cleft in the 70S ribosome. In Nitrosomonas europaea (strain ATCC 19718 / CIP 103999 / KCTC 2705 / NBRC 14298), this protein is Small ribosomal subunit protein uS11.